The primary structure comprises 100 residues: Omega-hexatoxin-Asp2a (100 aa).

An N-terminal signal peptide occupies residues 1 to 23 (MKFSKLSITLAVILTQAVFVLCG). Positions 24–55 (MKNEDFMEKGLESNELHDAIKKPVNSGKPDTE) are excised as a propeptide. 3 disulfides stabilise this stretch: cysteine 60–cysteine 73, cysteine 66–cysteine 79, and cysteine 72–cysteine 84.

The protein belongs to the neurotoxin 15 family. 02 (omega-actx) subfamily. In terms of tissue distribution, expressed by the venom gland.

The protein resides in the secreted. In terms of biological role, potent inhibitor of insect, but not mammalian, voltage-gated calcium channels (Cav). The protein is Omega-hexatoxin-Asp2a of Atrax sp. (strain Illawarra) (Funnel-web spider).